The primary structure comprises 350 residues: Legumin K (350 aa).

2 disordered regions span residues 37–86 (LGGN…GNSV) and 102–170 (EEDT…RKNG). Composition is skewed to basic and acidic residues over residues 104-118 (DTAK…ERSQ), 141-150 (EQSHSHSHRE), and 160-170 (EKQRSEERKNG). The Cupin type-1 domain maps to 182–329 (ENIADAAGAD…AFGLRQRQVT (148 aa)).

Belongs to the 11S seed storage protein (globulins) family. As to quaternary structure, hexamer; each subunit is composed of an acidic and a basic chain derived from a single precursor and linked by a disulfide bond.

In terms of biological role, this protein found in the seeds of many leguminous and non-leguminous plants is the source of sulfur-containing amino acids in seed meals. In Pisum sativum (Garden pea), this protein is Legumin K (LEGK).